The primary structure comprises 383 residues: uncharacterized protein (383 aa).

Belongs to the peptidase M20 family.

This is an uncharacterized protein from Staphylococcus aureus (strain USA300).